A 239-amino-acid chain; its full sequence is Orotidine 5'-phosphate decarboxylase (239 aa).

Substrate contacts are provided by residues D11, K33, 60–69 (DLKLHDIPTT), T123, R185, Q194, G214, and R215. The active-site Proton donor is K62.

Belongs to the OMP decarboxylase family. Type 1 subfamily. In terms of assembly, homodimer.

It catalyses the reaction orotidine 5'-phosphate + H(+) = UMP + CO2. Its pathway is pyrimidine metabolism; UMP biosynthesis via de novo pathway; UMP from orotate: step 2/2. Its function is as follows. Catalyzes the decarboxylation of orotidine 5'-monophosphate (OMP) to uridine 5'-monophosphate (UMP). The chain is Orotidine 5'-phosphate decarboxylase (pyrF) from Bacillus subtilis (strain 168).